The following is a 124-amino-acid chain: Ribonuclease pancreatic (124 aa).

Over residues 1-13 the composition is skewed to basic and acidic residues; that stretch reads KESAAAKFERQHI. The interval 1–23 is disordered; the sequence is KESAAAKFERQHIDSSTSSVSSS. 2 residues coordinate substrate: K7 and R10. The active-site Proton acceptor is H12. 4 disulfide bridges follow: C26–C84, C40–C95, C58–C110, and C65–C72. N34 carries N-linked (GlcNAc...) asparagine glycosylation. Substrate contacts are provided by residues 41 to 45, K66, and R85; that span reads KPVNT. H119 acts as the Proton donor in catalysis.

Belongs to the pancreatic ribonuclease family. In terms of assembly, monomer. Interacts with and forms tight 1:1 complexes with RNH1. Dimerization of two such complexes may occur. Interaction with RNH1 inhibits this protein. In terms of tissue distribution, pancreas.

The protein resides in the secreted. The enzyme catalyses an [RNA] containing cytidine + H2O = an [RNA]-3'-cytidine-3'-phosphate + a 5'-hydroxy-ribonucleotide-3'-[RNA].. It carries out the reaction an [RNA] containing uridine + H2O = an [RNA]-3'-uridine-3'-phosphate + a 5'-hydroxy-ribonucleotide-3'-[RNA].. Endonuclease that catalyzes the cleavage of RNA on the 3' side of pyrimidine nucleotides. Acts on single-stranded and double-stranded RNA. In Giraffa camelopardalis (Giraffe), this protein is Ribonuclease pancreatic (RNASE1).